The following is a 641-amino-acid chain: Protein GAMETE EXPRESSED 3 (641 aa).

The first 29 residues, 1–29, serve as a signal peptide directing secretion; the sequence is MVAFRFVYIPLPFFFFFFFFFVFFSGVSQ. A helical transmembrane segment spans residues 441–461; sequence IIWFLLFEFVIMVLFAALVRF. The segment at 570-627 is disordered; the sequence is ITIFQTPSDESSSEESYRDEHYDDVADDEHDEDDLDRKQKGKLLAHSEGSSNDGDGIA. Positions 584–593 are enriched in basic and acidic residues; the sequence is ESYRDEHYDD. A compositionally biased stretch (acidic residues) spans 594–603; the sequence is VADDEHDEDD.

In terms of tissue distribution, expressed in mature siliques and in pollen, mainly in the sperm cells. Detected in the egg cell within the female gametophyte.

It localises to the cell membrane. Functionally, required for micropylar pollen tube guidance. Plays a role during early embryo patterning. The protein is Protein GAMETE EXPRESSED 3 (GEX3) of Arabidopsis thaliana (Mouse-ear cress).